The sequence spans 513 residues: uncharacterized protein (513 aa).

Transmembrane regions (helical) follow at residues 3-23, 47-67, 71-91, 129-149, 153-173, 177-197, 233-253, 273-293, 320-340, 374-394, 395-415, 424-444, and 462-482; these read MTAFLLFLAIVGLTLIITYFA, LAIAGDYMSAASFLGIAGMIA, FDGFFYSIGFLVAYLVVLYIV, TFYMIAQLVGAGALIKLLLGL, AAVLIVGVLMTIYVVFGGMIA, VQIIKAVLLMAGTLVISIIVF, ETLSLNLALVLGTAGLPHILI, WIIGVFYIMTVFLGFGAAAFV, FLFAFVSAIAFATILAVVTGL, ASVAVSVLSILLAIFAQSLNV, AFLVALAFAVAASANLPLIVF, ASGALWGSLTGLISALVLVSM, and LIPLSNPGIISIPLGFLGAWL.

This sequence belongs to the sodium:solute symporter (SSF) (TC 2.A.21) family.

The protein resides in the cell membrane. This is an uncharacterized protein from Bacillus subtilis (strain 168).